The primary structure comprises 627 residues: Nuclear receptor subfamily 4 group A member 3 (627 aa).

Residues 1–112 are activation function (AF)-1 domain; that stretch reads MPCVQAQYSP…HHHHHHHHHQ (112 aa). Positions 1 to 139 are required for DNA-PK heterotrimer; that stretch reads MPCVQAQYSP…PSTSMYFKQS (139 aa). Residues 1-292 are interaction with NCOA1, NCOA2, NCOA3 and KAT2B; the sequence is MPCVQAQYSP…NRSSSSGEGT (292 aa). Disordered stretches follow at residues 96 to 162 and 268 to 289; these read HGYH…DELP and ASSLLGESPSLPSPPNRSSSSG. The segment covering 97–112 has biased composition (basic residues); sequence GYHHHHHHHHHHHHHQ. Positions 141-150 are enriched in pro residues; sequence PSTPTTPGFP. Positions 269–288 are enriched in low complexity; the sequence is SSLLGESPSLPSPPNRSSSS. Residues 290-365 constitute a DNA-binding region (nuclear receptor); that stretch reads EGTCAVCGDN…VGMVKEVVRT (76 aa). 2 NR C4-type zinc fingers span residues 293-313 and 329-353; these read CAVCGDNAACQHYGVRTCEGC and CLANKNCPVDKRRRNRCQYCRFQKC. Residues 365–395 are disordered; it reads TDSLKGRRGRLPSKPKSPLQQEPSQPSPPSP. Residues 378–388 show a composition bias toward low complexity; sequence KPKSPLQQEPS. Residues 380–627 are interaction with KAT2B; it reads KSPLQQEPSQ…DKLFLDTLPF (248 aa). Residues 395–624 enclose the NR LBD domain; sequence PPICMMNALV…SVIDKLFLDT (230 aa).

This sequence belongs to the nuclear hormone receptor family. NR4 subfamily. Interacts with SIX3 (via homeobox); differentially regulates the transcriptional activities of NR4A3. Interacts with NCOA2; potentiates the activity of the NR4A3. Interacts with NCOA1, NCOA3, MED1 and KAT2B. Interacts with EP300 and NCOA2; mediates the recruitment of MED1 in the coactivator complex. Interacts with the constituents of DNA-PK heterotrimer PRKDC, XRCC6 and XRCC5; phosphorylates and prevents NR4A3 ubiquitinylation and degradation. Interacts with NR3C1 (via nuclear receptor DNA-binding domain); the interactions represses transcription activity of NR4A3 on the POMC promoter Nur response element (NurRE). Interacts with TRIM28; the interactions potentiates NR4A3 activity on NurRE promoter. Binds DNA as a monomer and homodimer. Interacts with PARP1; activates PARP1 by improving acetylation of PARP1 and suppressing the interaction between PARP1 and SIRT1. Post-translationally, phosphorylated by PRKDC. As to expression, ubiquitous. Highest levels of expression in brain. Widely expressed throughout the arcuate nucleus region of the hypothalamus, namely in AgRP neurons.

It localises to the nucleus. In terms of biological role, transcriptional activator that binds to regulatory elements in promoter regions in a cell- and response element (target)-specific manner. Induces gene expression by binding as monomers to the NR4A1 response element (NBRE) 5'-AAAAGGTCA-3' site and as homodimers to the Nur response element (NurRE) site in the promoter of their regulated target genes. Plays a role in the regulation of proliferation, survival and differentiation of many different cell types and also in metabolism and inflammation. Mediates proliferation of vascular smooth muscle, myeloid progenitor cell and type B pancreatic cells; promotes mitogen-induced vascular smooth muscle cell proliferation through transactivation of SKP2 promoter by binding a NBRE site. Upon PDGF stimulation, stimulates vascular smooth muscle cell proliferation by regulating CCND1 and CCND2 expression. In islets, induces type B pancreatic cell proliferation through up-regulation of genes that activate cell cycle, as well as genes that cause degradation of the CDKN1A. Negatively regulates myeloid progenitor cell proliferation by repressing RUNX1 in a NBRE site-independent manner. During inner ear, plays a role as a key mediator of the proliferative growth phase of semicircular canal development. Also mediates survival of neuron and smooth muscle cells; mediates CREB-induced neuronal survival, and during hippocampus development, plays a critical role in pyramidal cell survival and axonal guidance. Is required for S phase entry of the cell cycle and survival of smooth muscle cells by inducing CCND1, resulting in RB1 phosphorylation. Binds to NBRE motif in CCND1 promoter, resulting in the activation of the promoter and CCND1 transcription. Also plays a role in inflammation; upon TNF stimulation, mediates monocyte adhesion by inducing the expression of VCAM1 and ICAM1 by binding to the NBRE consensus site. In mast cells activated by Fc-epsilon receptor cross-linking, promotes the synthesis and release of cytokines but impairs events leading to degranulation. Also plays a role in metabolism; by modulating feeding behavior; and by playing a role in energy balance by inhibiting the glucocorticoid-induced orexigenic neuropeptides AGRP expression, at least in part by forming a complex with activated NR3C1 on the AGRP- glucocorticoid response element (GRE), and thus weakening the DNA binding activity of NR3C1. Upon catecholamines stimulation, regulates gene expression that controls oxidative metabolism in skeletal muscle. Plays a role in glucose transport by regulating translocation of the SLC2A4 glucose transporter to the cell surface. Finally, during gastrulation plays a crucial role in the formation of anterior mesoderm by controlling cell migration. Inhibits adipogenesis. Also participates in cardiac hypertrophy by activating PARP1. This chain is Nuclear receptor subfamily 4 group A member 3 (Nr4a3), found in Mus musculus (Mouse).